Consider the following 626-residue polypeptide: UvrABC system protein C (626 aa).

A GIY-YIG domain is found at 26–105 (PEPGVYFMRD…IKQHQPHFNV (80 aa)). Residues 215–250 (SELINTLSLQMEQAAEDLNFEQAARLRDQIKGLQGL) form the UVR domain.

Belongs to the UvrC family. As to quaternary structure, interacts with UvrB in an incision complex.

The protein localises to the cytoplasm. Its function is as follows. The UvrABC repair system catalyzes the recognition and processing of DNA lesions. UvrC both incises the 5' and 3' sides of the lesion. The N-terminal half is responsible for the 3' incision and the C-terminal half is responsible for the 5' incision. The sequence is that of UvrABC system protein C from Acaryochloris marina (strain MBIC 11017).